Here is a 406-residue protein sequence, read N- to C-terminus: 3-oxoacyl-[acyl-carrier-protein] synthase 1 (406 aa).

One can recognise a Ketosynthase family 3 (KS3) domain in the interval 1–403 (MRRTVITGFG…GTNATLIFKR (403 aa)). Active-site for beta-ketoacyl synthase activity residues include Cys162, His297, and His332.

This sequence belongs to the thiolase-like superfamily. Beta-ketoacyl-ACP synthases family. Homodimer.

It is found in the cytoplasm. The enzyme catalyses a fatty acyl-[ACP] + malonyl-[ACP] + H(+) = a 3-oxoacyl-[ACP] + holo-[ACP] + CO2. It catalyses the reaction (3Z)-decenoyl-[ACP] + malonyl-[ACP] + H(+) = 3-oxo-(5Z)-dodecenoyl-[ACP] + holo-[ACP] + CO2. It participates in lipid metabolism; fatty acid biosynthesis. In terms of biological role, involved in the type II fatty acid elongation cycle. Catalyzes the elongation of a wide range of acyl-ACP by the addition of two carbons from malonyl-ACP to an acyl acceptor. Can also use unsaturated fatty acids. Catalyzes a key reaction in unsaturated fatty acid (UFA) synthesis, the elongation of the cis-3-decenoyl-ACP produced by FabA. This chain is 3-oxoacyl-[acyl-carrier-protein] synthase 1 (fabB), found in Haemophilus influenzae (strain ATCC 51907 / DSM 11121 / KW20 / Rd).